Reading from the N-terminus, the 427-residue chain is 3-phosphoshikimate 1-carboxyvinyltransferase (427 aa).

Lys-22, Ser-23, and Arg-27 together coordinate 3-phosphoshikimate. Lys-22 is a binding site for phosphoenolpyruvate. Phosphoenolpyruvate contacts are provided by Gly-96 and Arg-124. 7 residues coordinate 3-phosphoshikimate: Ser-169, Ser-170, Gln-171, Ser-197, Asp-313, Asn-336, and Lys-340. Position 171 (Gln-171) interacts with phosphoenolpyruvate. The active-site Proton acceptor is Asp-313. Residues Arg-344, Arg-386, and Lys-411 each contribute to the phosphoenolpyruvate site.

This sequence belongs to the EPSP synthase family. In terms of assembly, monomer.

Its subcellular location is the cytoplasm. It catalyses the reaction 3-phosphoshikimate + phosphoenolpyruvate = 5-O-(1-carboxyvinyl)-3-phosphoshikimate + phosphate. The protein operates within metabolic intermediate biosynthesis; chorismate biosynthesis; chorismate from D-erythrose 4-phosphate and phosphoenolpyruvate: step 6/7. Its function is as follows. Catalyzes the transfer of the enolpyruvyl moiety of phosphoenolpyruvate (PEP) to the 5-hydroxyl of shikimate-3-phosphate (S3P) to produce enolpyruvyl shikimate-3-phosphate and inorganic phosphate. The polypeptide is 3-phosphoshikimate 1-carboxyvinyltransferase (Salmonella paratyphi A (strain ATCC 9150 / SARB42)).